The following is a 206-amino-acid chain: Nucleoside triphosphate pyrophosphatase (206 aa).

Catalysis depends on aspartate 78, which acts as the Proton acceptor.

This sequence belongs to the Maf family. A divalent metal cation is required as a cofactor.

It is found in the cytoplasm. It catalyses the reaction a ribonucleoside 5'-triphosphate + H2O = a ribonucleoside 5'-phosphate + diphosphate + H(+). The catalysed reaction is a 2'-deoxyribonucleoside 5'-triphosphate + H2O = a 2'-deoxyribonucleoside 5'-phosphate + diphosphate + H(+). Nucleoside triphosphate pyrophosphatase. May have a dual role in cell division arrest and in preventing the incorporation of modified nucleotides into cellular nucleic acids. This is Nucleoside triphosphate pyrophosphatase from Prochlorococcus marinus (strain MIT 9312).